The sequence spans 320 residues: Malate dehydrogenase (320 aa).

Residues 10-15 (GAGQIG) and Asp-34 each bind NAD(+). Residues Arg-83 and Arg-89 each coordinate substrate. NAD(+) contacts are provided by residues Asn-96 and 119-121 (ITN). Residues Asn-121 and Arg-152 each contribute to the substrate site. The Proton acceptor role is filled by His-176.

This sequence belongs to the LDH/MDH superfamily. MDH type 3 family.

It carries out the reaction (S)-malate + NAD(+) = oxaloacetate + NADH + H(+). Catalyzes the reversible oxidation of malate to oxaloacetate. The sequence is that of Malate dehydrogenase from Methylobacterium nodulans (strain LMG 21967 / CNCM I-2342 / ORS 2060).